The primary structure comprises 732 residues: Polyribonucleotide nucleotidyltransferase (732 aa).

Mg(2+) contacts are provided by aspartate 489 and aspartate 495. In terms of domain architecture, KH spans 556–615 (PKIDTIQIDVDKIKIVIGKGGETIDKIIAETGVKIDIDEEGLVQIFSSDQAAIDRTKEII). Residues 625–693 (GEVYHAKVVR…DKGRVDASMK (69 aa)) form the S1 motif domain. The tract at residues 691 to 732 (SMKALIPRPPKPEKKEEKASEAKEASNDQASKSQSETASEEK) is disordered. The segment covering 700–716 (PKPEKKEEKASEAKEAS) has biased composition (basic and acidic residues). A compositionally biased stretch (polar residues) spans 717 to 732 (NDQASKSQSETASEEK).

The protein belongs to the polyribonucleotide nucleotidyltransferase family. Mg(2+) is required as a cofactor.

It localises to the cytoplasm. It carries out the reaction RNA(n+1) + phosphate = RNA(n) + a ribonucleoside 5'-diphosphate. In terms of biological role, involved in mRNA degradation. Catalyzes the phosphorolysis of single-stranded polyribonucleotides processively in the 3'- to 5'-direction. The chain is Polyribonucleotide nucleotidyltransferase from Streptococcus uberis (strain ATCC BAA-854 / 0140J).